Consider the following 464-residue polypeptide: Protein FAM90A5 (464 aa).

Disordered regions lie at residues 16–42 (RAQT…DPRL), 70–389 (PATL…HDGA), and 415–437 (HSPE…SEAP). 2 stretches are compositionally biased toward basic and acidic residues: residues 74–89 (GKKE…KPRV) and 97–114 (NKDK…DPQR). Residues 180-197 (LASLSPLRKASLSSSSSL) show a composition bias toward low complexity.

Belongs to the FAM90 family.

In Homo sapiens (Human), this protein is Protein FAM90A5.